Reading from the N-terminus, the 449-residue chain is MALDILAMAPLYQAPAINRIGPKTDPSKRPADPLKPLVLSRTKLTTIEAKRIMSILDEAIYKVELVTLLSYVASNREDMEGMLGEDVMRAVREHEDLCQVLLENVRCLKEKERQLQEQKEAEEEGWLRDRLLSIELQKSSLSPLMQQIKDSTKNVLRLLLSNPQAARLLQMQTQGRSAEAQNFIDSLIELRGFLFEKLLTSPMEARDKAQFLQDISRQNSNNQQIIDTLEKELAERMKNRNAEVEKENFVIQELKNHLHQVLKFSENSLVRTKQEAEKQQKADFRASQARVAKIQQEILQLQSQFYNLVMENREAEQALRKKKYKVETEIENWIQKYDTEMGEKQEELEDLDAVHREEKISLEELRRRHKVLVGEFAQIREEREINSKKRMEAEQEMVRMVRAATLIQALWKGYLVRSLLRSKKKRGKGKAKDKEKGKQKGKEKGKGKK.

A coiled-coil region spans residues 90 to 125; the sequence is AVREHEDLCQVLLENVRCLKEKERQLQEQKEAEEEG. The 30-residue stretch at 400 to 429 folds into the IQ domain; the sequence is MVRAATLIQALWKGYLVRSLLRSKKKRGKG. The disordered stretch occupies residues 422–449; the sequence is SKKKRGKGKAKDKEKGKQKGKEKGKGKK. The segment covering 430–449 has biased composition (basic and acidic residues); that stretch reads KAKDKEKGKQKGKEKGKGKK.

This sequence belongs to the DRC10 family. As to quaternary structure, component of the nexin-dynein regulatory complex (N-DRC). Interacts with CFAP52.

Its subcellular location is the cytoplasm. It localises to the cytoskeleton. The protein resides in the flagellum axoneme. Functionally, component of the nexin-dynein regulatory complex (N-DRC), a key regulator of ciliary/flagellar motility which maintains the alignment and integrity of the distal axoneme and regulates microtubule sliding in motile axonemes. This is Dynein regulatory complex protein 10 (IQCD) from Homo sapiens (Human).